A 373-amino-acid polypeptide reads, in one-letter code: Meiosis-specific kinetochore protein (373 aa).

Disordered regions lie at residues 1 to 91 (MWPL…QDEK) and 250 to 276 (STPE…LTST). Basic and acidic residues predominate over residues 77–91 (SLQENRSSEDTQDEK). The short motif at 275 to 277 (STP) is the POLO box domain (PBD)-binding element. The tract at residues 332–335 (EICC) is required for localization to kinetochores.

In terms of assembly, interacts with CENPC. Interacts with PLK1; required for recruitment of PLK1 at kinetochores.

It is found in the chromosome. It localises to the centromere. Its subcellular location is the kinetochore. Functionally, key regulator of kinetochore function during meiosis I: required both for mono-orientation of kinetochores on sister chromosomes and protection of centromeric cohesin from separase-mediated cleavage. Acts by facilitating kinetochore mono-orientation during meiosis I, when kinetochores on sister chromosomes face the same direction and are thus captured and pulled by spindle fibers from the same pole. Also required to prevent cleavage of cohesin at centromeres during meiosis I, possibly by acting as a regulator of the shugoshin-dependent protection pathway. Acts in collaboration with PLK1: required for PLK1 enrichment to kinetochores. Not required during meiosis II or mitosis. The polypeptide is Meiosis-specific kinetochore protein (Homo sapiens (Human)).